The primary structure comprises 392 residues: ER-bound oxygenase mpaB (392 aa).

Residues 1 to 21 (MSLPLPPALSELARALPYSRT) are Lumenal-facing. Residues 22 to 41 (QWLPIFVGFLIGYPILIRAL) form a helical membrane-spanning segment. Residues 42–392 (RYKRHGEMKK…WSKYHATTND (351 aa)) lie on the Cytoplasmic side of the membrane. The segment at 352-376 (DLGQKKGPQGDPGNDEGIKDLKDGE) is disordered. Positions 367-376 (EGIKDLKDGE) are enriched in basic and acidic residues.

It belongs to the mpaB oxygenase family.

The protein localises to the endoplasmic reticulum membrane. It catalyses the reaction 4-farnesyl-3,5-dihydroxy-6-methylphthalide + AH2 + 2 O2 = (4E,8E)-10-(4,6-dihydroxy-7-methyl-3-oxo-1,3-dihydro-2-benzofuran-5-yl)-4,8-dimethyldeca-4,8-dienoate + acetone + A + H2O + H(+). The protein operates within secondary metabolite biosynthesis; terpenoid biosynthesis. ER-bound oxygenase; part of the gene cluster that mediates the biosynthesis of mycophenolic acid (MPA), the first isolated antibiotic natural product in the world obtained from a culture of Penicillium brevicompactum in 1893. MpaB catalyzes the oxidative cleavage the C19-C20 double bond in farnesyl-DHMP (FDHMP) to yield FDHMP-3C via a mycophenolic aldehyde intermediate. The first step of the pathway is the synthesis of 5-methylorsellinic acid (5MOA) by the cytosolic polyketide synthase mpaC. 5MOA is then converted to the phthalide compound 5,7-dihydroxy-4,6-dimethylphthalide (DHMP) by the endoplasmic reticulum-bound cytochrome P450 monooxygenase mpaDE. MpaDE first catalyzes hydroxylation of 5-MOA to 4,6-dihydroxy-2-(hydroxymethyl)-3-methylbenzoic acid (DHMB). MpaDE then acts as a lactone synthase that catalyzes the ring closure to convert DHMB into DHMP. The next step is the prenylation of DHMP by the Golgi apparatus-associated prenyltransferase mpaA to yield farnesyl-DHMP (FDHMP). The ER-bound oxygenase mpaB then mediates the oxidative cleavage the C19-C20 double bond in FDHMP to yield FDHMP-3C via a mycophenolic aldehyde intermediate. The O-methyltransferase mpaG catalyzes the methylation of FDHMP-3C to yield MFDHMP-3C. After the cytosolic methylation of FDHMP-3C, MFDHMP-3C enters into peroxisomes probably via free diffusion due to its low molecular weight. Upon a peroxisomal CoA ligation reaction, catalyzed by a beta-oxidation component enzyme acyl-CoA ligase ACL891, MFDHMP-3C-CoA would then be restricted to peroxisomes for the following beta-oxidation pathway steps. The peroxisomal beta-oxidation machinery than converts MFDHMP-3C-CoA into MPA_CoA, via a beta-oxidation chain-shortening process. Finally mpaH acts as a peroxisomal acyl-CoA hydrolase with high substrate specificity toward MPA-CoA to release the final product MPA. The sequence is that of ER-bound oxygenase mpaB from Penicillium brevicompactum.